A 426-amino-acid polypeptide reads, in one-letter code: Enolase (426 aa).

Gln-162 serves as a coordination point for (2R)-2-phosphoglycerate. Glu-204 (proton donor) is an active-site residue. Residues Asp-241, Glu-288, and Asp-315 each coordinate Mg(2+). (2R)-2-phosphoglycerate-binding residues include Lys-340, Arg-369, Ser-370, and Lys-391. Residue Lys-340 is the Proton acceptor of the active site.

Belongs to the enolase family. Mg(2+) serves as cofactor.

It is found in the cytoplasm. Its subcellular location is the secreted. The protein localises to the cell surface. The enzyme catalyses (2R)-2-phosphoglycerate = phosphoenolpyruvate + H2O. Its pathway is carbohydrate degradation; glycolysis; pyruvate from D-glyceraldehyde 3-phosphate: step 4/5. Functionally, catalyzes the reversible conversion of 2-phosphoglycerate (2-PG) into phosphoenolpyruvate (PEP). It is essential for the degradation of carbohydrates via glycolysis. This is Enolase from Bacteroides thetaiotaomicron (strain ATCC 29148 / DSM 2079 / JCM 5827 / CCUG 10774 / NCTC 10582 / VPI-5482 / E50).